The chain runs to 39 residues: Basic phospholipase A2 (39 aa).

Ca(2+) is bound by residues tyrosine 27, glycine 29, and glycine 31.

The protein belongs to the phospholipase A2 family. Group II subfamily. D49 sub-subfamily. Ca(2+) serves as cofactor. As to expression, expressed by the venom gland.

It localises to the secreted. The enzyme catalyses a 1,2-diacyl-sn-glycero-3-phosphocholine + H2O = a 1-acyl-sn-glycero-3-phosphocholine + a fatty acid + H(+). Is selectively inhibited by the gamma-phospholipase A2 inhibitor (PLI) CgMIP-I (AC P0DQP7) but not by the alpha-PLI CgMIP-II (AC P0DQP8). Snake venom phospholipase A2 (PLA2) that shows high myotoxic activities, induces mild edema, and shows cytolytic, and anti-coagulant activities, as well as intracerebral lethal effect. Does not induce lethality at a dose of 5 ug/g, when intravenously injected into mice. PLA2 catalyzes the calcium-dependent hydrolysis of the 2-acyl groups in 3-sn-phosphoglycerides. The sequence is that of Basic phospholipase A2 from Cerrophidion godmani (Porthidium godmani).